A 1128-amino-acid chain; its full sequence is Nck-associated protein 1 (1128 aa).

Residues 640–665 (AVNKKSKKQTGKKGEPEREKPGVESM) form a disordered region. Residues 651–665 (KKGEPEREKPGVESM) show a composition bias toward basic and acidic residues. A helical transmembrane segment spans residues 995 to 1015 (IACLLMVFVAVSLPTLASNVM).

This sequence belongs to the HEM-1/HEM-2 family.

The protein resides in the cell membrane. Its subcellular location is the cell projection. It localises to the lamellipodium membrane. Its function is as follows. Part of the WAVE complex that regulates lamellipodia formation. The WAVE complex regulates actin filament reorganization via its interaction with the Arp2/3 complex. Actin remodeling activity is regulated by RAC1. Plays a role in neural tube closure. The polypeptide is Nck-associated protein 1 (nckap1) (Xenopus laevis (African clawed frog)).